We begin with the raw amino-acid sequence, 150 residues long: Large ribosomal subunit protein bL9 (150 aa).

It belongs to the bacterial ribosomal protein bL9 family.

In terms of biological role, binds to the 23S rRNA. In Streptococcus sanguinis (strain SK36), this protein is Large ribosomal subunit protein bL9.